The following is a 906-amino-acid chain: Cadherin-2 (906 aa).

An N-terminal signal peptide occupies residues 1–25 (MCRIAGALRTLLPLLAALLQASVEA). Residues 26 to 159 (SGEIALCKTG…HSGHLQRQKR (134 aa)) constitute a propeptide that is removed on maturation. Phosphoserine; by FAM20C occurs at positions 96 and 135. Cadherin domains are found at residues 160–267 (DWVI…RPEF), 268–382 (LHQV…PPEF), 383–497 (TAMT…NPYF), 498–603 (APNP…DNAP), and 604–714 (QVLP…DVDR). Residues 160-724 (DWVIPPINLP…IVGAGLGTGA (565 aa)) are Extracellular-facing. A Ca(2+)-binding site is contributed by glutamate 170. N-linked (GlcNAc...) asparagine glycosylation is present at asparagine 190. Residues aspartate 226, glutamate 228, aspartate 259, methionine 260, asparagine 261, aspartate 262, and asparagine 263 each coordinate Ca(2+). N-linked (GlcNAc...) asparagine glycosylation is present at asparagine 273. Aspartate 293, aspartate 295, and asparagine 301 together coordinate Ca(2+). Asparagine 325 is a glycosylation site (N-linked (GlcNAc...) asparagine). Aspartate 353 is a binding site for Ca(2+). Asparagine 402, asparagine 572, asparagine 651, and asparagine 692 each carry an N-linked (GlcNAc...) asparagine glycan. Residues 725–745 (IIAILLCIIILLILVLMFVVW) traverse the membrane as a helical segment. Residues 746 to 906 (MKRRDKERQA…LADMYGGGDD (161 aa)) lie on the Cytoplasmic side of the membrane. Positions 863–880 (SGSTAGSLSSLNSSSSGG) are enriched in low complexity. The segment at 863–884 (SGSTAGSLSSLNSSSSGGEQDY) is disordered.

In terms of assembly, homodimer (via extracellular region). Can also form heterodimers with other cadherins (via extracellular region). Dimerization occurs in trans, i.e. with a cadherin chain from another cell. Interacts with CDCP1. Interacts with PCDH8; this complex may also include TAOK2. The interaction with PCDH8 may lead to internalization through TAOK2/p38 MAPK pathway. Identified in a complex containing FGFR4, NCAM1, CDH2, PLCG1, FRS2, SRC, SHC1, GAP43 and CTTN. May interact with OBSCN (via protein kinase domain 2). Interacts with FBXO45. Post-translationally, cleaved by MMP24. Ectodomain cleavage leads to the generation of a soluble 90 kDa N-terminal soluble fragment and a 45 kDa membrane-bound C-terminal fragment 1 (CTF1), which is further cleaved by gamma-secretase into a 35 kDa. Cleavage in neural stem cells by MMP24 affects CDH2-mediated anchorage of neural stem cells to ependymocytes in the adult subependymal zone, leading to modulate neural stem cell quiescence. May be phosphorylated by OBSCN.

It localises to the cell membrane. Its subcellular location is the sarcolemma. It is found in the cell junction. The protein localises to the cell surface. The protein resides in the desmosome. It localises to the adherens junction. In terms of biological role, calcium-dependent cell adhesion protein; preferentially mediates homotypic cell-cell adhesion by dimerization with a CDH2 chain from another cell. Cadherins may thus contribute to the sorting of heterogeneous cell types. Acts as a regulator of neural stem cells quiescence by mediating anchorage of neural stem cells to ependymocytes in the adult subependymal zone: upon cleavage by MMP24, CDH2-mediated anchorage is affected, leading to modulate neural stem cell quiescence. Plays a role in cell-to-cell junction formation between pancreatic beta cells and neural crest stem (NCS) cells, promoting the formation of processes by NCS cells. Required for proper neurite branching. Required for pre- and postsynaptic organization. CDH2 may be involved in neuronal recognition mechanism. In hippocampal neurons, may regulate dendritic spine density. This chain is Cadherin-2 (CDH2), found in Homo sapiens (Human).